The primary structure comprises 142 residues: Hemoglobin subunit alpha-A (142 aa).

Residues 2–142 form the Globin domain; that stretch reads VLSGSDKTNV…VGNVLTAKYR (141 aa). His-59 contributes to the O2 binding site. Residue His-88 coordinates heme b.

Belongs to the globin family. As to quaternary structure, heterotetramer of two alpha chains and two beta chains. As to expression, red blood cells.

Involved in oxygen transport from the lung to the various peripheral tissues. This is Hemoglobin subunit alpha-A (HBAA) from Ara ararauna (Blue-and-yellow macaw).